Here is a 346-residue protein sequence, read N- to C-terminus: tRNA-specific 2-thiouridylase MnmA (346 aa).

6–13 (AMSGGTDS) contacts ATP. Catalysis depends on cysteine 90, which acts as the Nucleophile. Cysteine 90 and cysteine 187 are joined by a disulfide. Glycine 114 is an ATP binding site. The tract at residues 137–139 (KDQ) is interaction with tRNA. Catalysis depends on cysteine 187, which acts as the Cysteine persulfide intermediate. The interval 292-293 (RY) is interaction with tRNA.

The protein belongs to the MnmA/TRMU family.

It localises to the cytoplasm. It catalyses the reaction S-sulfanyl-L-cysteinyl-[protein] + uridine(34) in tRNA + AH2 + ATP = 2-thiouridine(34) in tRNA + L-cysteinyl-[protein] + A + AMP + diphosphate + H(+). Functionally, catalyzes the 2-thiolation of uridine at the wobble position (U34) of tRNA, leading to the formation of s(2)U34. In Nitratidesulfovibrio vulgaris (strain DP4) (Desulfovibrio vulgaris), this protein is tRNA-specific 2-thiouridylase MnmA.